Here is a 356-residue protein sequence, read N- to C-terminus: Fructose-1,6-bisphosphatase class 1 1 (356 aa).

Mg(2+) contacts are provided by glutamate 106, aspartate 129, leucine 131, and aspartate 132. Residues 132-135, asparagine 225, tyrosine 258, and lysine 288 contribute to the substrate site; that span reads DGSS. Residue glutamate 294 coordinates Mg(2+).

Belongs to the FBPase class 1 family. In terms of assembly, homotetramer. Mg(2+) is required as a cofactor.

The protein localises to the cytoplasm. The catalysed reaction is beta-D-fructose 1,6-bisphosphate + H2O = beta-D-fructose 6-phosphate + phosphate. The protein operates within carbohydrate biosynthesis; gluconeogenesis. The sequence is that of Fructose-1,6-bisphosphatase class 1 1 from Salinibacter ruber (strain DSM 13855 / M31).